The chain runs to 370 residues: Proline-rich protein 5-like (370 aa).

Ser28 bears the Phosphoserine mark. The interval 327–370 (PTFPPPHRQCSSEPSILDSPDEMELEDVASGSQEDSELNCASLS) is disordered.

This sequence belongs to the PROTOR family. In terms of assembly, interacts with the mammalian target of rapamycin complex 2 (mTORC2) which contains MTOR, MLST8, PRR5, RICTOR, MAPKAP1 and DEPTOR. Interacts with RFFL. Interacts (via C-terminus) with ZFP36 (via C-terminus); this interaction may accelerate ZFP36-mediated mRNA decay during stress. Interacts with RICTOR. In terms of processing, ubiquitinated. Ubiquitination by RFFL promotes proteasomal degradation of PRR5L thereby modifying the substrate-specific activity of the mTORC2 complex. Ubiquitination by RFFL is stimulated by LPA/lysophosphatidic acid.

Associates with the mTORC2 complex that regulates cellular processes including survival and organization of the cytoskeleton. Regulates the activity of the mTORC2 complex in a substrate-specific manner preventing for instance the specific phosphorylation of PKCs and thereby controlling cell migration. Plays a role in the stimulation of ZFP36-mediated mRNA decay of several ZFP36-associated mRNAs, such as TNF-alpha and GM-CSF, in response to stress. Required for ZFP36 localization to cytoplasmic stress granule (SG) and P-body (PB) in response to stress. This chain is Proline-rich protein 5-like (Prr5l), found in Rattus norvegicus (Rat).